The primary structure comprises 215 residues: UPF0502 protein YceH (215 aa).

Belongs to the UPF0502 family.

This chain is UPF0502 protein YceH, found in Salmonella arizonae (strain ATCC BAA-731 / CDC346-86 / RSK2980).